The sequence spans 446 residues: Probable glucuronosyltransferase Os04g0650300 (446 aa).

The Cytoplasmic segment spans residues 1-30 (MKLPLLRPLWPMLSPAAGSPDSPPEPSKPS). A helical; Signal-anchor for type II membrane protein transmembrane segment spans residues 31–51 (LPAAWLLLHALFCATSMAVGF). Over 52 to 446 (RFSRLIVYLL…TTLLNTEGQH (395 aa)) the chain is Lumenal. Asn87 carries an N-linked (GlcNAc...) asparagine glycan. Positions 425–446 (QQDAKPETPLKRTTLLNTEGQH) are disordered.

It belongs to the glycosyltransferase 43 family.

Its subcellular location is the golgi apparatus membrane. Involved in the synthesis of glucuronoxylan hemicellulose in secondary cell walls. In Oryza sativa subsp. japonica (Rice), this protein is Probable glucuronosyltransferase Os04g0650300.